The sequence spans 224 residues: ATP phosphoribosyltransferase (224 aa).

The protein belongs to the ATP phosphoribosyltransferase family. Short subfamily. As to quaternary structure, heteromultimer composed of HisG and HisZ subunits.

It localises to the cytoplasm. It carries out the reaction 1-(5-phospho-beta-D-ribosyl)-ATP + diphosphate = 5-phospho-alpha-D-ribose 1-diphosphate + ATP. It functions in the pathway amino-acid biosynthesis; L-histidine biosynthesis; L-histidine from 5-phospho-alpha-D-ribose 1-diphosphate: step 1/9. Functionally, catalyzes the condensation of ATP and 5-phosphoribose 1-diphosphate to form N'-(5'-phosphoribosyl)-ATP (PR-ATP). Has a crucial role in the pathway because the rate of histidine biosynthesis seems to be controlled primarily by regulation of HisG enzymatic activity. The polypeptide is ATP phosphoribosyltransferase (Cupriavidus pinatubonensis (strain JMP 134 / LMG 1197) (Cupriavidus necator (strain JMP 134))).